Here is a 151-residue protein sequence, read N- to C-terminus: Small ribosomal subunit protein uS11 (151 aa).

The tract at residues 130 to 151 is disordered; sequence EDVTPIPSDSTRRKGGRRGRRL. Residues 142–151 are compositionally biased toward basic residues; it reads RKGGRRGRRL.

It belongs to the universal ribosomal protein uS11 family.

The protein is Small ribosomal subunit protein uS11 of Aedes aegypti (Yellowfever mosquito).